The following is a 469-amino-acid chain: NADH-quinone oxidoreductase subunit N (469 aa).

Helical transmembrane passes span 9–29 (PLLM…LIAG), 40–60 (VGVM…VQMV), 76–96 (ATGV…AVAG), 105–125 (EAET…LAGA), 128–148 (LLLL…LVGL), 162–182 (YLMG…LYGL), 201–221 (VAVA…AGGV), 234–254 (ANAT…LVAL), 265–285 (LAWP…GNLA), 294–316 (RLLG…VAGA), 327–347 (YLGG…ALPG), 365–385 (AAAL…AVFI), 402–422 (LAVV…RWII), and 448–468 (VLAA…WQLV).

Belongs to the complex I subunit 2 family. In terms of assembly, NDH-1 is composed of 14 different subunits. Subunits NuoA, H, J, K, L, M, N constitute the membrane sector of the complex.

The protein resides in the cell membrane. The enzyme catalyses a quinone + NADH + 5 H(+)(in) = a quinol + NAD(+) + 4 H(+)(out). In terms of biological role, NDH-1 shuttles electrons from NADH, via FMN and iron-sulfur (Fe-S) centers, to quinones in the respiratory chain. The immediate electron acceptor for the enzyme in this species is believed to be a menaquinone. Couples the redox reaction to proton translocation (for every two electrons transferred, four hydrogen ions are translocated across the cytoplasmic membrane), and thus conserves the redox energy in a proton gradient. The sequence is that of NADH-quinone oxidoreductase subunit N from Mycobacterium sp. (strain JLS).